Here is a 473-residue protein sequence, read N- to C-terminus: Serine/threonine-protein phosphatase 2A activator 1 (473 aa).

Positions 360-473 (NAVPPPTSAH…HVPTKAPWAK (114 aa)) are disordered. Over residues 368-378 (AHMSTTQSQSR) the composition is skewed to polar residues. The span at 395-416 (APWATATQAAPPAGAGTAAPWA) shows a compositional bias: low complexity.

This sequence belongs to the PTPA-type PPIase family.

The protein localises to the cytoplasm. The protein resides in the nucleus. It carries out the reaction [protein]-peptidylproline (omega=180) = [protein]-peptidylproline (omega=0). Its function is as follows. PPIases accelerate the folding of proteins. It catalyzes the cis-trans isomerization of proline imidic peptide bonds in oligopeptides. Acts as a regulatory subunit for PP2A-like phosphatases modulating their activity or substrate specificity, probably by inducing a conformational change in the catalytic subunit, a direct target of the PPIase. Can reactivate inactive phosphatase PP2A-phosphatase methylesterase complexes (PP2Ai) in presence of ATP and Mg(2+) by dissociating the inactive form from the complex. The protein is Serine/threonine-protein phosphatase 2A activator 1 (rrd1) of Aspergillus fumigatus (strain ATCC MYA-4609 / CBS 101355 / FGSC A1100 / Af293) (Neosartorya fumigata).